The sequence spans 698 residues: uncharacterized protein (698 aa).

The signal sequence occupies residues 1–17; that stretch reads MKKRHLLSLLALGISTA. Residue C18 is the site of N-palmitoyl cysteine attachment. C18 is lipidated: S-diacylglycerol cysteine.

This sequence to E.coli YmcA.

Its subcellular location is the cell membrane. This is an uncharacterized protein from Escherichia coli (strain K12).